Consider the following 399-residue polypeptide: Probable 3-ketosteroid-9-alpha-monooxygenase, oxygenase component (399 aa).

In terms of domain architecture, Rieske spans tryptophan 26–valine 128. Cysteine 67, histidine 69, cysteine 86, and histidine 89 together coordinate [2Fe-2S] cluster. Residues asparagine 175, histidine 181, histidine 186, and aspartate 307 each contribute to the Fe cation site.

In terms of assembly, homotrimer. The two-component system 3-ketosteroid-9-alpha-monooxygenase is composed of an oxygenase component KshA and a reductase component KshB. Requires [2Fe-2S] cluster as cofactor. Fe cation is required as a cofactor.

Could catalyze the introduction of a 9alpha-hydroxyl moiety into the ring B of 3-ketosteroid substrates. The sequence is that of Probable 3-ketosteroid-9-alpha-monooxygenase, oxygenase component from Rhodococcus rhodochrous.